A 305-amino-acid polypeptide reads, in one-letter code: Oxygen-dependent coproporphyrinogen-III oxidase (305 aa).

Ser98 contacts substrate. His102 and His112 together coordinate a divalent metal cation. His112 acts as the Proton donor in catalysis. 114–116 (NVR) contributes to the substrate binding site. 2 residues coordinate a divalent metal cation: His151 and His181. An important for dimerization region spans residues 246–281 (YVEFNLVYDRGTLFGLQSGGRTESILMSMPPLARWE). Substrate is bound at residue 264–266 (GGR).

This sequence belongs to the aerobic coproporphyrinogen-III oxidase family. Homodimer. It depends on a divalent metal cation as a cofactor.

It localises to the cytoplasm. It catalyses the reaction coproporphyrinogen III + O2 + 2 H(+) = protoporphyrinogen IX + 2 CO2 + 2 H2O. It functions in the pathway porphyrin-containing compound metabolism; protoporphyrin-IX biosynthesis; protoporphyrinogen-IX from coproporphyrinogen-III (O2 route): step 1/1. Functionally, involved in the heme biosynthesis. Catalyzes the aerobic oxidative decarboxylation of propionate groups of rings A and B of coproporphyrinogen-III to yield the vinyl groups in protoporphyrinogen-IX. This chain is Oxygen-dependent coproporphyrinogen-III oxidase, found in Vibrio vulnificus (strain YJ016).